We begin with the raw amino-acid sequence, 327 residues long: Vacuolar protein sorting-associated protein 26A (327 aa).

The disordered stretch occupies residues 305-327 (RNFHQRYESPEPRPSLSAEQPEM).

It belongs to the VPS26 family. In terms of assembly, component of the heterotrimeric retromer cargo-selective complex (CSC) which is believed to associate with variable sorting nexins to form functionally distinct retromer complex variants.

The protein resides in the cytoplasm. It localises to the endosome membrane. The protein localises to the early endosome. Functionally, acts as a component of the retromer cargo-selective complex (CSC). The CSC is believed to be the core functional component of retromer or respective retromer complex variants acting to prevent missorting of selected transmembrane cargo proteins into the lysosomal degradation pathway. Retromer mediates retrograde transport of cargo proteins from endosomes to the trans-Golgi network (TGN). In Danio rerio (Zebrafish), this protein is Vacuolar protein sorting-associated protein 26A (vps26a).